The primary structure comprises 562 residues: Formate--tetrahydrofolate ligase (562 aa).

Position 71-78 (71-78 (TPAGEGKS)) interacts with ATP.

This sequence belongs to the formate--tetrahydrofolate ligase family.

The catalysed reaction is (6S)-5,6,7,8-tetrahydrofolate + formate + ATP = (6R)-10-formyltetrahydrofolate + ADP + phosphate. The protein operates within one-carbon metabolism; tetrahydrofolate interconversion. The chain is Formate--tetrahydrofolate ligase from Bacillus cereus (strain AH187).